Here is a 426-residue protein sequence, read N- to C-terminus: Mitogen-activated protein kinase 8 (426 aa).

The region spanning 26 to 321 (YQNLKPIGSG…VDDALQHPYI (296 aa)) is the Protein kinase domain. Residues 33 to 38 (GSGAQG) and lysine 55 contribute to the ATP site. Aspartate 151 acts as the Proton acceptor in catalysis. Threonine 183 carries the phosphothreonine modification. A TXY motif is present at residues 183–185 (TPY). Tyrosine 185 carries the phosphotyrosine modification. Residues 375–426 (QPAPLGAAVTDGSQAHTSSSSGDASSMSTDPTLPSDTDSSLETSAGTLGCCR) form a disordered region. Over residues 384-404 (TDGSQAHTSSSSGDASSMSTD) the composition is skewed to low complexity. Over residues 405 to 420 (PTLPSDTDSSLETSAG) the composition is skewed to polar residues.

This sequence belongs to the protein kinase superfamily. CMGC Ser/Thr protein kinase family. MAP kinase subfamily. Mg(2+) is required as a cofactor. Dually phosphorylated on Thr-183 and Tyr-185, which activates the enzyme. As to expression, strongly expressed in presumptive ectoderm and mesoderm regions and weakly expressed in endoderm regions during early stages of embryo development. Expressed in the head and dorsal regions during neurula and tailbud stages.

Its subcellular location is the cytoplasm. It is found in the nucleus. The protein localises to the synapse. It catalyses the reaction L-seryl-[protein] + ATP = O-phospho-L-seryl-[protein] + ADP + H(+). The enzyme catalyses L-threonyl-[protein] + ATP = O-phospho-L-threonyl-[protein] + ADP + H(+). Activated by threonine and tyrosine phosphorylation, potentially by the dual-specificity kinase, MKK7. Indirectly activated by Wnt5a. Its function is as follows. Responds to activation by environmental stress and pro-inflammatory cytokines by phosphorylating a number of transcription factors, and thus regulating transcriptional activity. Regulates morphogenic cell movements, controlling convergent extension during gastrulation. May play a role in the regulation of the circadian clock. The chain is Mitogen-activated protein kinase 8 (mapk8) from Xenopus laevis (African clawed frog).